Here is a 353-residue protein sequence, read N- to C-terminus: Holliday junction branch migration complex subunit RuvB (353 aa).

The tract at residues 1–183 is large ATPase domain (RuvB-L); that stretch reads MSGEGLVSAA…FGFTAHMDFY (183 aa). ATP-binding positions include L22, R23, G64, K67, T68, S69, 130–132, R173, Y183, and R220; that span reads EDF. T68 is a binding site for Mg(2+). The tract at residues 184–254 is small ATPAse domain (RuvB-S); the sequence is DAAELALVLT…VARAALRIYD (71 aa). The interval 257-353 is head domain (RuvB-H); sequence ALGLDRLDRA…ALFGEDLPAS (97 aa). R312 and R317 together coordinate DNA.

Belongs to the RuvB family. As to quaternary structure, homohexamer. Forms an RuvA(8)-RuvB(12)-Holliday junction (HJ) complex. HJ DNA is sandwiched between 2 RuvA tetramers; dsDNA enters through RuvA and exits via RuvB. An RuvB hexamer assembles on each DNA strand where it exits the tetramer. Each RuvB hexamer is contacted by two RuvA subunits (via domain III) on 2 adjacent RuvB subunits; this complex drives branch migration. In the full resolvosome a probable DNA-RuvA(4)-RuvB(12)-RuvC(2) complex forms which resolves the HJ.

It is found in the cytoplasm. It catalyses the reaction ATP + H2O = ADP + phosphate + H(+). The RuvA-RuvB-RuvC complex processes Holliday junction (HJ) DNA during genetic recombination and DNA repair, while the RuvA-RuvB complex plays an important role in the rescue of blocked DNA replication forks via replication fork reversal (RFR). RuvA specifically binds to HJ cruciform DNA, conferring on it an open structure. The RuvB hexamer acts as an ATP-dependent pump, pulling dsDNA into and through the RuvAB complex. RuvB forms 2 homohexamers on either side of HJ DNA bound by 1 or 2 RuvA tetramers; 4 subunits per hexamer contact DNA at a time. Coordinated motions by a converter formed by DNA-disengaged RuvB subunits stimulates ATP hydrolysis and nucleotide exchange. Immobilization of the converter enables RuvB to convert the ATP-contained energy into a lever motion, pulling 2 nucleotides of DNA out of the RuvA tetramer per ATP hydrolyzed, thus driving DNA branch migration. The RuvB motors rotate together with the DNA substrate, which together with the progressing nucleotide cycle form the mechanistic basis for DNA recombination by continuous HJ branch migration. Branch migration allows RuvC to scan DNA until it finds its consensus sequence, where it cleaves and resolves cruciform DNA. The polypeptide is Holliday junction branch migration complex subunit RuvB (Parafrankia sp. (strain EAN1pec)).